The chain runs to 205 residues: Recombination protein RecR (205 aa).

The segment at 59–74 (CSVCFHLSAEPVCEVC) adopts a C4-type zinc-finger fold. Residues 82 to 181 (GTLCVVADSR…KVTRIAFGLP (100 aa)) enclose the Toprim domain.

It belongs to the RecR family.

In terms of biological role, may play a role in DNA repair. It seems to be involved in an RecBC-independent recombinational process of DNA repair. It may act with RecF and RecO. This chain is Recombination protein RecR, found in Cyanothece sp. (strain PCC 7425 / ATCC 29141).